Consider the following 739-residue polypeptide: TonB-dependent heme receptor A (739 aa).

The first 22 residues, Met-1–Ala-22, serve as a signal peptide directing secretion. Residues Gly-38–Lys-150 form the TBDR plug domain. The 579-residue stretch at Leu-161–Phe-739 folds into the TBDR beta-barrel domain.

Belongs to the TonB-dependent receptor family.

The protein resides in the cell outer membrane. Heme receptor. This chain is TonB-dependent heme receptor A (tdhA), found in Haemophilus ducreyi (strain 35000HP / ATCC 700724).